Reading from the N-terminus, the 43-residue chain is MALLDLQAMDTPAEDSFGELRTGSQVSLLVCEYSSLSVVLCTP.

The signal sequence occupies residues Met1–Arg21. Cross-links (lanthionine (Ser-Cys)) lie at residues Ser24 to Cys31 and Ser34 to Cys41. 2,3-didehydroalanine (Ser) is present on residues Ser27 and Ser37.

This sequence belongs to the lanthionine-containing morphogen protein family. In terms of processing, maturation involves the enzymatic conversion of Ser into dehydrated AA and the formation of thioether bonds with cysteine. This is followed by membrane translocation and cleavage of the modified precursor.

In terms of biological role, lanthionine-containing peptide devoid of antibiotic properties, involved in the formation of aerial mycelium. Suggested to self-assemble at air-water interfaces, thus providing a film of surfactant through which nascent aerial hyphae can emerge. The aerial hyphae differentiate further into spores. The sequence is that of Lanthionine-containing peptide SapB (ramS) from Streptomyces griseus.